A 58-amino-acid chain; its full sequence is Microcin J25 (58 aa).

A propeptide spanning residues 1–37 (MIKHFHFNKLSSGKKNNVPSPAKGVIQIKKSASQLTK) is cleaved from the precursor. Positions 38–45 (GGAGHVPE) form a cross-link, isoglutamyl glycine isopeptide (Gly-Glu).

Its subcellular location is the secreted. Functionally, peptide antibiotic that functions through inhibition of the bacterial DNA-dependent RNA polymerase (RNAP). Inhibits transcription by binding deep within RNAP secondary channel, where it sterically blocks the folding of the trigger loop, which is essential for efficient catalysis. In addition, it also seems to restrict access of nucleotide substrates to the catalytic center, and shows a partially competitive mode of inhibition with them. Exhibits potent bacteriocidal activity against a range of Enterobacteriaceae, including several pathogenic E.coli, Salmonella and Shigella strains. Also acts on the cytoplasmic membrane of Salmonella newport, producing alteration of membrane permeability and disruption of the subsequent gradient dissipation, which inhibits several processes essential for cell viability, such as oxygen consumption. Induces bacterial filamentation in susceptible cells in a non-SOS-dependent way, but this phenotype may result from impaired transcription of genes coding for cell division proteins. This is Microcin J25 (mcjA) from Escherichia coli.